Reading from the N-terminus, the 184-residue chain is UPF0149 protein PputGB1_5261 (184 aa).

It belongs to the UPF0149 family.

This Pseudomonas putida (strain GB-1) protein is UPF0149 protein PputGB1_5261.